Consider the following 227-residue polypeptide: Urease accessory protein UreF (227 aa).

It belongs to the UreF family. UreD, UreF and UreG form a complex that acts as a GTP-hydrolysis-dependent molecular chaperone, activating the urease apoprotein by helping to assemble the nickel containing metallocenter of UreC. The UreE protein probably delivers the nickel.

The protein localises to the cytoplasm. Required for maturation of urease via the functional incorporation of the urease nickel metallocenter. In Actinobacillus pleuropneumoniae serotype 3 (strain JL03), this protein is Urease accessory protein UreF.